A 57-amino-acid chain; its full sequence is Toxin GhoT (57 aa).

Helical transmembrane passes span 7 to 27 and 37 to 57; these read ILIFYVIGVNISFVIIWFISH and AFLVGITWPMSLPVALLFSLF.

It belongs to the GhoT/OrtT toxin family.

The protein localises to the cell inner membrane. Its function is as follows. Toxic component of a type V toxin-antitoxin (TA) system. Causes membrane damage when induced by MqsR, slowing cell growth and leading to the formation of dormant persister cells; involved with GhoS, its antitoxin, in reducing cell growth during antibacterial stress. Its toxic effects are neutralized by GhoS, which digests ghoT transcripts in a sequence-specific manner. The polypeptide is Toxin GhoT (Escherichia coli O157:H7).